A 229-amino-acid polypeptide reads, in one-letter code: Thylakoid lumenal 19 kDa protein, chloroplastic (229 aa).

It is found in the plastid. The protein resides in the chloroplast thylakoid lumen. The chain is Thylakoid lumenal 19 kDa protein, chloroplastic from Arabidopsis thaliana (Mouse-ear cress).